The chain runs to 180 residues: Bifunctional protein PyrR (180 aa).

A PRPP-binding motif is present at residues 101–113 (VILVDDVLYTGRT).

It belongs to the purine/pyrimidine phosphoribosyltransferase family. PyrR subfamily. In terms of assembly, homodimer and homohexamer; in equilibrium.

It carries out the reaction UMP + diphosphate = 5-phospho-alpha-D-ribose 1-diphosphate + uracil. Regulates transcriptional attenuation of the pyrimidine nucleotide (pyr) operon by binding in a uridine-dependent manner to specific sites on pyr mRNA. This disrupts an antiterminator hairpin in the RNA and favors formation of a downstream transcription terminator, leading to a reduced expression of downstream genes. In terms of biological role, also displays a weak uracil phosphoribosyltransferase activity which is not physiologically significant. In Bacillus cereus (strain ATCC 14579 / DSM 31 / CCUG 7414 / JCM 2152 / NBRC 15305 / NCIMB 9373 / NCTC 2599 / NRRL B-3711), this protein is Bifunctional protein PyrR.